An 87-amino-acid polypeptide reads, in one-letter code: Small ribosomal subunit protein bS20 (87 aa).

The tract at residues 1–27 is disordered; sequence MANIKSAKKRAVQSEKRRKHNASRRSM.

This sequence belongs to the bacterial ribosomal protein bS20 family.

In terms of biological role, binds directly to 16S ribosomal RNA. The chain is Small ribosomal subunit protein bS20 from Pectobacterium carotovorum subsp. carotovorum (strain PC1).